The following is a 182-amino-acid chain: Large ribosomal subunit protein uL6 (182 aa).

Belongs to the universal ribosomal protein uL6 family. As to quaternary structure, part of the 50S ribosomal subunit.

In terms of biological role, this protein binds to the 23S rRNA, and is important in its secondary structure. It is located near the subunit interface in the base of the L7/L12 stalk, and near the tRNA binding site of the peptidyltransferase center. In Pelotomaculum thermopropionicum (strain DSM 13744 / JCM 10971 / SI), this protein is Large ribosomal subunit protein uL6.